The chain runs to 917 residues: Alanine--tRNA ligase (917 aa).

The Zn(2+) site is built by His-615, His-619, Cys-719, and His-723.

It belongs to the class-II aminoacyl-tRNA synthetase family. Requires Zn(2+) as cofactor.

The protein localises to the cytoplasm. It carries out the reaction tRNA(Ala) + L-alanine + ATP = L-alanyl-tRNA(Ala) + AMP + diphosphate. Functionally, catalyzes the attachment of alanine to tRNA(Ala) in a two-step reaction: alanine is first activated by ATP to form Ala-AMP and then transferred to the acceptor end of tRNA(Ala). Also edits incorrectly charged Ser-tRNA(Ala) and Gly-tRNA(Ala) via its editing domain. This is Alanine--tRNA ligase from Thermococcus kodakarensis (strain ATCC BAA-918 / JCM 12380 / KOD1) (Pyrococcus kodakaraensis (strain KOD1)).